The chain runs to 177 residues: ATP synthase subunit delta (177 aa).

This sequence belongs to the ATPase delta chain family. F-type ATPases have 2 components, F(1) - the catalytic core - and F(0) - the membrane proton channel. F(1) has five subunits: alpha(3), beta(3), gamma(1), delta(1), epsilon(1). F(0) has three main subunits: a(1), b(2) and c(10-14). The alpha and beta chains form an alternating ring which encloses part of the gamma chain. F(1) is attached to F(0) by a central stalk formed by the gamma and epsilon chains, while a peripheral stalk is formed by the delta and b chains.

The protein resides in the cell inner membrane. F(1)F(0) ATP synthase produces ATP from ADP in the presence of a proton or sodium gradient. F-type ATPases consist of two structural domains, F(1) containing the extramembraneous catalytic core and F(0) containing the membrane proton channel, linked together by a central stalk and a peripheral stalk. During catalysis, ATP synthesis in the catalytic domain of F(1) is coupled via a rotary mechanism of the central stalk subunits to proton translocation. In terms of biological role, this protein is part of the stalk that links CF(0) to CF(1). It either transmits conformational changes from CF(0) to CF(1) or is implicated in proton conduction. The sequence is that of ATP synthase subunit delta from Shewanella denitrificans (strain OS217 / ATCC BAA-1090 / DSM 15013).